A 3175-amino-acid polypeptide reads, in one-letter code: Replicase polyprotein 1ab (3175 aa).

The segment at 25–44 (CEHGAGLCCEVDGSTLCAEC) adopts a C4-type; atypical zinc-finger fold. The Peptidase C31 domain maps to 66-156 (SPVPVGHKFL…PAANSLIVTT (91 aa)). The 104-residue stretch at 157–260 (DQEQDGFCWL…WSCLPAGNYG (104 aa)) folds into the Peptidase C32 domain. Active-site for Nsp1 papain-like cysteine proteinase activity residues include cysteine 164 and histidine 230. The OTU-like stretch occupies residues 261 to 339 (GYNPPGDGAC…KQHWRVKRAK (79 aa)). The 100-residue stretch at 261–360 (GYNPPGDGAC…RGICNCQRMS (100 aa)) folds into the Peptidase C33 domain. The active-site For Nsp2 cysteine proteinase activity is cysteine 270. Cysteine 319 serves as a coordination point for Zn(2+). Catalysis depends on histidine 332, which acts as the For Nsp2 cysteine proteinase activity. The Zn(2+) site is built by cysteine 349, cysteine 354, and cysteine 356. Positions 386-451 (VVTPEGQPRP…TRLQGASTQE (66 aa)) are disordered. A run of 7 helical transmembrane segments spans residues 530–550 (AVIA…SFAI), 551–571 (GLIP…SSAN), 625–645 (FDAA…ILYL), 829–849 (LIGG…STFT), 903–923 (YWIA…RLAI), 935–955 (LVLL…SLAG), and 977–997 (LVTM…LMGL). The interval 530 to 645 (AVIACLLPIW…DLCSFAILYL (116 aa)) is HD1. The interval 829–997 (LIGGWIYGIC…ALAVYSLMGL (169 aa)) is HD2. The 204-residue stretch at 1065–1268 (GLFRSPKARG…MLIDGLSNRE (204 aa)) folds into the Peptidase S32 domain. Catalysis depends on charge relay system; for 3C-like serine proteinase activity residues histidine 1103, aspartate 1129, and serine 1184. The next 4 helical transmembrane spans lie at 1291-1311 (AYLP…KSVG), 1333-1353 (CLFH…WFYI), 1355-1375 (AAGT…MLFV), and 1385-1405 (GWAI…AALG). Residues 1291 to 1405 (AYLPYVLGFF…SITMLAAALG (115 aa)) form an HD3 region. Asparagine 1501 carries an N-linked (GlcNAc...) asparagine; by host glycan. The interval 1577-1614 (NDTPVKPMPSRRRRKGLPKGAQLEWDRHQEEKRNAGDD) is disordered. Over residues 1600 to 1612 (EWDRHQEEKRNAG) the composition is skewed to basic and acidic residues. In terms of domain architecture, NiRAN spans 1716–1883 (LANPVEAVNQ…DKVAAAVSGD (168 aa)). The RdRp catalytic domain maps to 2116 to 2251 (KYCLETDLES…TTPNQHYAAS (136 aa)). The 68-residue stretch at 2371 to 2438 (SAVCTVCGAA…SPKQMVPKVP (68 aa)) folds into the AV ZBD domain. Zn(2+) contacts are provided by cysteine 2374, cysteine 2377, cysteine 2387, cysteine 2392, cysteine 2395, histidine 2399, histidine 2402, cysteine 2403, cysteine 2412, histidine 2414, cysteine 2423, and cysteine 2426. A (+)RNA virus helicase ATP-binding domain is found at 2496 to 2661 (PGSHIAVPLQ…LRHFVSLEPL (166 aa)). 2528–2535 (GPPGSGKT) serves as a coordination point for ATP. The 132-residue stretch at 2662–2793 (RVCHRFGAAV…PPTACHLGQE (132 aa)) folds into the (+)RNA virus helicase C-terminal domain. One can recognise an AV-Nsp11N/CoV-Nsp15M domain in the interval 2840-2930 (KISCLPRVAQ…LTEWVDGKAR (91 aa)). A NendoU domain is found at 2932-3054 (LPDSLFSSGR…MVWRNATFYV (123 aa)). Catalysis depends on residues histidine 2963, histidine 2978, and lysine 3007.

Belongs to the arteriviridae polyprotein family. In terms of assembly, nsp1 interacts with cellular transcription cofactor SND1/p100. Post-translationally, specific enzymatic cleavages in vivo by its own proteases yield mature proteins. There are two alternative pathways for processing. Either nsp4-5 is cleaved, which represents the major pathway or the nsp5-6 and nsp6-7 are processed, which represents the minor pathway. The major pathway occurs when nsp2 acts as a cofactor for nsp4.

It is found in the host nucleus. It localises to the host cytoplasm. The protein resides in the host membrane. Its subcellular location is the host perinuclear region. It carries out the reaction RNA(n) + a ribonucleoside 5'-triphosphate = RNA(n+1) + diphosphate. The enzyme catalyses ATP + H2O = ADP + phosphate + H(+). The catalysed reaction is Thiol-dependent hydrolysis of ester, thioester, amide, peptide and isopeptide bonds formed by the C-terminal Gly of ubiquitin (a 76-residue protein attached to proteins as an intracellular targeting signal).. It catalyses the reaction uridylyl-uridylyl-ribonucleotide-RNA = a 3'-end uridylyl-2',3'-cyclophospho-uridine-RNA + a 5'-end dephospho-ribonucleoside-RNA. In terms of biological role, the replicase polyprotein 1ab is a multifunctional protein: it contains the activities necessary for the transcription of negative stranded RNA, leader RNA, subgenomic mRNAs and progeny virion RNA as well as proteinases responsible for the cleavage of the polyprotein into functional products. Nsp1 is essential for viral subgenomic mRNA synthesis. Functionally, nsp2 cysteine proteinase which cleaves the nsp2/nsp3 site in the polyprotein. Also displays deubiquitinating and deISGylase activities. The deubiquitinating activity cleaves both ubiquitinated and ISGylated products and may therefore regulate ubiquitin and ISG15 dependent host innate immunity. Its function is as follows. The 3C-like serine proteinase chain is responsible for the majority of cleavages as it cleaves the C-terminus of the polyprotein. In terms of biological role, the helicase chain, which contains a zinc finger structure, displays RNA and DNA duplex-unwinding activities with 5' to 3' polarity. Plays a role in viral transcription/replication and prevents the simultaneous activation of host cell dsRNA sensors, such as MDA5/IFIH1, OAS, and PKR. Acts by degrading the 5'-polyuridines generated during replication of the poly(A) region of viral genomic and subgenomic RNAs. Catalyzes a two-step reaction in which a 2'3'-cyclic phosphate (2'3'-cP) is first generated by 2'-O transesterification, which is then hydrolyzed to a 3'-phosphate (3'-P). If not degraded, poly(U) RNA would hybridize with poly(A) RNA tails and activate host dsRNA sensors. This chain is Replicase polyprotein 1ab (rep), found in Equidae (horses).